A 359-amino-acid chain; its full sequence is Non-classical arabinogalactan protein 31 (359 aa).

Positions 1-24 are cleaved as a signal peptide; that stretch reads MGFIGKSVLVSLVALWCFTSSVFT. The tract at residues 31 to 215 is disordered; that stretch reads TQTPSLAPAP…PPVSPPTKPP (185 aa). Residues 44–66 are compositionally biased toward basic residues; that stretch reads HHGHHHPHPPHHHHPHPHPHPHP. The segment covering 67-215 has biased composition (pro residues); that stretch reads PAKSPVKPPV…PPVSPPTKPP (149 aa). Proline 71, proline 75, proline 79, proline 82, proline 83, proline 87, proline 91, proline 95, proline 99, proline 103, proline 107, proline 111, proline 114, proline 115, proline 119, proline 123, proline 127, proline 131, proline 135, proline 139, proline 143, proline 147, proline 151, proline 155, proline 159, proline 163, proline 167, proline 171, proline 175, proline 179, proline 183, proline 186, proline 187, proline 191, proline 195, proline 199, proline 203, proline 207, proline 210, proline 211, proline 215, and proline 219 each carry 4-hydroxyproline. Residues proline 71, proline 75, proline 79, proline 82, proline 83, proline 87, proline 91, proline 95, proline 99, proline 103, proline 107, proline 111, proline 114, proline 115, proline 119, proline 123, proline 127, proline 131, proline 135, proline 139, proline 143, proline 147, proline 151, proline 155, proline 159, proline 163, proline 167, proline 171, proline 175, proline 179, proline 183, proline 186, proline 187, proline 191, proline 195, proline 199, proline 203, proline 207, proline 210, proline 211, proline 215, and proline 219 are each glycosylated (O-linked (Ara...) hydroxyproline). Residues 90–109 form repeat 1; the sequence is PPVYPPTKAPVKPPTKPPVK. Tandem repeats lie at residues 122–141, 142–161, and 162–181. 2 N-linked (GlcNAc...) asparagine glycosylation sites follow: asparagine 226 and asparagine 269.

This sequence belongs to the non-classical AGP family. In terms of processing, hydroxylated on numerous prolines in the proline-rich region. Post-translationally, O-glycosylated on numerous hydroxyprolines in the proline-rich region; noncontiguous hydroxylproline residues are glycosylated with arabinogalactan. Expressed in vascular bundles of roots, leaves, sepals and stamen filaments, and pistils but not stigma.

Its subcellular location is the secreted. The protein localises to the cell wall. In terms of biological role, proteoglycan that may contribute to the strengthening of cell walls. In Arabidopsis thaliana (Mouse-ear cress), this protein is Non-classical arabinogalactan protein 31.